A 321-amino-acid polypeptide reads, in one-letter code: Mitochondrial thiamine pyrophosphate carrier 1 (321 aa).

A run of 6 helical transmembrane segments spans residues 12 to 28, 91 to 107, 126 to 146, 184 to 200, 221 to 237, and 284 to 301; these read GTRR…GLVS, LMYV…YRTT, FVAG…LDLL, AAVG…FATY, AAGV…MFPL, and GLTV…VTMW. Solcar repeat units lie at residues 12-110, 120-206, and 214-309; these read GTRR…TTQA, PPSA…LRPP, and PFGS…SLRL.

This sequence belongs to the mitochondrial carrier (TC 2.A.29) family.

The protein resides in the mitochondrion inner membrane. Its function is as follows. Mitochondrial transporter that mediates uptake of thiamine pyrophosphate (ThPP) into mitochondria. The chain is Mitochondrial thiamine pyrophosphate carrier 1 (tpc1) from Aspergillus niger (strain ATCC MYA-4892 / CBS 513.88 / FGSC A1513).